The sequence spans 396 residues: Elongation factor Tu (396 aa).

Residues 10–206 (KPHVNVGTIG…AVDAYIPTPQ (197 aa)) form the tr-type G domain. The interval 19–26 (GHVDHGKT) is G1. 19 to 26 (GHVDHGKT) is a GTP binding site. Residue threonine 26 coordinates Mg(2+). The interval 60 to 64 (GITIA) is G2. Residues 81-84 (DCPG) are G3. GTP-binding positions include 81–85 (DCPGH) and 136–139 (NKVD). The segment at 136 to 139 (NKVD) is G4. The tract at residues 174 to 176 (SAL) is G5.

The protein belongs to the TRAFAC class translation factor GTPase superfamily. Classic translation factor GTPase family. EF-Tu/EF-1A subfamily. In terms of assembly, monomer.

It is found in the cytoplasm. It carries out the reaction GTP + H2O = GDP + phosphate + H(+). GTP hydrolase that promotes the GTP-dependent binding of aminoacyl-tRNA to the A-site of ribosomes during protein biosynthesis. This Anaeromyxobacter dehalogenans (strain 2CP-C) protein is Elongation factor Tu.